A 689-amino-acid chain; its full sequence is Glycine--tRNA ligase beta subunit (689 aa).

This sequence belongs to the class-II aminoacyl-tRNA synthetase family. As to quaternary structure, tetramer of two alpha and two beta subunits.

Its subcellular location is the cytoplasm. It carries out the reaction tRNA(Gly) + glycine + ATP = glycyl-tRNA(Gly) + AMP + diphosphate. The protein is Glycine--tRNA ligase beta subunit of Shewanella baltica (strain OS155 / ATCC BAA-1091).